Consider the following 396-residue polypeptide: Methionine import ATP-binding protein MetN 2 (396 aa).

The ABC transporter domain maps to 41–280; that stretch reads VSFELVGKVF…PRHGATRALL (240 aa). 77–84 lines the ATP pocket; that stretch reads GRSGAGKS.

Belongs to the ABC transporter superfamily. Methionine importer (TC 3.A.1.24) family. The complex is composed of two ATP-binding proteins (MetN), two transmembrane proteins (MetI) and a solute-binding protein (MetQ).

The protein localises to the cell inner membrane. The catalysed reaction is L-methionine(out) + ATP + H2O = L-methionine(in) + ADP + phosphate + H(+). The enzyme catalyses D-methionine(out) + ATP + H2O = D-methionine(in) + ADP + phosphate + H(+). Functionally, part of the ABC transporter complex MetNIQ involved in methionine import. Responsible for energy coupling to the transport system. In Burkholderia pseudomallei (strain K96243), this protein is Methionine import ATP-binding protein MetN 2.